Reading from the N-terminus, the 359-residue chain is Fructose-bisphosphate aldolase (359 aa).

D-glyceraldehyde 3-phosphate is bound at residue S50. Residue D83 is the Proton donor of the active site. 4 residues coordinate Zn(2+): H84, D105, E142, and H198. Position 199 (G199) interacts with dihydroxyacetone phosphate. A Zn(2+)-binding site is contributed by H232. Residues 233-235 and 275-278 each bind dihydroxyacetone phosphate; these read GSS and NIDT.

Zn(2+) serves as cofactor.

It carries out the reaction beta-D-fructose 1,6-bisphosphate = D-glyceraldehyde 3-phosphate + dihydroxyacetone phosphate. It functions in the pathway carbohydrate degradation; glycolysis; D-glyceraldehyde 3-phosphate and glycerone phosphate from D-glucose: step 4/4. Its function is as follows. Catalyzes the aldol condensation of dihydroxyacetone phosphate (DHAP or glycerone-phosphate) with glyceraldehyde 3-phosphate (G3P) to form fructose 1,6-bisphosphate (FBP) in gluconeogenesis and the reverse reaction in glycolysis. The protein is Fructose-bisphosphate aldolase of Nostoc sp. (strain PCC 7120 / SAG 25.82 / UTEX 2576).